The primary structure comprises 114 residues: Protein ORF3 (114 aa).

Hydrophobic stretches follow at residues 6-22 (CALG…CLCC) and 33-53 (AVVG…GLIL). The tract at residues 28–68 (VSRLAAVVGGAAAVPAVVSGVTGLILSPSQSPIFIQPTPLP) is interaction with host HPX. The interval 72–114 (PLRPGLDLAFANQPGHLAPLGEIRPSAPPLPPVADLPQPGLRR) is homodimerization, and interaction with host AMBP/bikunin. Positions 91–114 (LGEIRPSAPPLPPVADLPQPGLRR) are disordered. Positions 95–104 (RPSAPPLPPV) are interaction with host SRC, HCK, FYN, PIK3R3 and GRB2. Positions 96–99 (PSAP) match the PTAP/PSAP motif motif.

The protein belongs to the hepevirus ORF3 protein family. In terms of assembly, forms homooligomers. Interacts with host SRC, HCK, FYN, PIK3R3 and GRB2 (via SH3 domain); binding does not activate the kinases. Interacts with host AMBP/bikunin and AMBP/alpha-1-microglobulin peptides. Interacts with host HPX/hemopexin. Interacts (when phosphorylated) with capsid protein ORF2. Interacts with host TSG101; this interaction plays a role in viral release from the host cell. Interacts with host SIRPA; this interaction down-regulates the phosphorylation of host IRF3. Palmitoylated in the N-terminus.

The protein localises to the host endoplasmic reticulum membrane. The protein resides in the host cytoplasm. Its subcellular location is the host cytoskeleton. It is found in the virion. It localises to the host cell membrane. Functionally, small multifunctional phosphoprotein involved in virion morphogenesis, egress and counteracting host innate immunity. Plays critical roles in the final steps of viral release by interacting with host TSG101, a member of the vacuolar protein-sorting pathway and using other cellular host proteins involved in vesicle formation pathway. Also acts as a viroporin and forms ion conductive pores allowing viral particle release. Impairs the generation of type I interferon by down-regulating host TLR3 and TLR7 as well as their downstream signaling pathways. Down-regulates the phosphorylation of host IRF3 via the interaction with host SIRP-alpha, thereby inhibiting IFN-I expression. Interacts with host microtubules. The sequence is that of Protein ORF3 from Hepatitis E virus genotype 2 (isolate Human/Mexico) (HEV-2).